The following is a 418-amino-acid chain: Putative F-box protein At1g20795 (418 aa).

Residues 1–46 enclose the F-box domain; sequence METLGLPLPLFEKILFRLDPISLVMMKCTRRSFNSHISEDPYFKSK.

This is Putative F-box protein At1g20795 from Arabidopsis thaliana (Mouse-ear cress).